The following is a 366-amino-acid chain: Flagellar P-ring protein (366 aa).

Residues 1–24 (MWPLLLAVALSTLLPLAMPGSAGA) form the signal peptide.

Belongs to the FlgI family. In terms of assembly, the basal body constitutes a major portion of the flagellar organelle and consists of four rings (L,P,S, and M) mounted on a central rod.

It localises to the periplasm. The protein localises to the bacterial flagellum basal body. Functionally, assembles around the rod to form the L-ring and probably protects the motor/basal body from shearing forces during rotation. The sequence is that of Flagellar P-ring protein from Nitratidesulfovibrio vulgaris (strain ATCC 29579 / DSM 644 / CCUG 34227 / NCIMB 8303 / VKM B-1760 / Hildenborough) (Desulfovibrio vulgaris).